Consider the following 156-residue polypeptide: Small ribosomal subunit protein uS7 (156 aa).

This sequence belongs to the universal ribosomal protein uS7 family. In terms of assembly, part of the 30S ribosomal subunit. Contacts proteins S9 and S11.

Functionally, one of the primary rRNA binding proteins, it binds directly to 16S rRNA where it nucleates assembly of the head domain of the 30S subunit. Is located at the subunit interface close to the decoding center, probably blocks exit of the E-site tRNA. In Clostridium botulinum (strain Kyoto / Type A2), this protein is Small ribosomal subunit protein uS7.